A 396-amino-acid chain; its full sequence is NADH-quinone oxidoreductase subunit D (396 aa).

This sequence belongs to the complex I 49 kDa subunit family. In terms of assembly, NDH-1 is composed of 14 different subunits. Subunits NuoB, C, D, E, F, and G constitute the peripheral sector of the complex.

The protein localises to the cell inner membrane. The catalysed reaction is a quinone + NADH + 5 H(+)(in) = a quinol + NAD(+) + 4 H(+)(out). NDH-1 shuttles electrons from NADH, via FMN and iron-sulfur (Fe-S) centers, to quinones in the respiratory chain. The immediate electron acceptor for the enzyme in this species is believed to be ubiquinone. Couples the redox reaction to proton translocation (for every two electrons transferred, four hydrogen ions are translocated across the cytoplasmic membrane), and thus conserves the redox energy in a proton gradient. The protein is NADH-quinone oxidoreductase subunit D of Methylorubrum extorquens (strain PA1) (Methylobacterium extorquens).